A 535-amino-acid chain; its full sequence is Dimethylaniline monooxygenase [N-oxide-forming] 2 (535 aa).

Ala-2 is modified (N-acetylalanine). FAD-binding positions include 9-13 (GAGVS), Glu-32, 40-41 (LW), and 61-62 (NT). NADP(+) contacts are provided by residues 60 to 61 (TN) and 195 to 198 (SASD). Lys-492 participates in a covalent cross-link: Glycyl lysine isopeptide (Lys-Gly) (interchain with G-Cter in SUMO). The chain crosses the membrane as a helical span at residues 510–530 (LSASFLMKILALVAVFVAFFS).

The protein belongs to the FMO family. Requires FAD as cofactor. Mg(2+) is required as a cofactor. In terms of tissue distribution, lung.

The protein resides in the microsome membrane. Its subcellular location is the endoplasmic reticulum membrane. Functionally, catalyzes the oxidative metabolism of numerous xenobiotics, including mainly therapeutic drugs and insecticides that contain a soft nucleophile, most commonly nitrogen and sulfur and participates to their bioactivation. The protein is Dimethylaniline monooxygenase [N-oxide-forming] 2 of Cavia porcellus (Guinea pig).